Reading from the N-terminus, the 154-residue chain is 6,7-dimethyl-8-ribityllumazine synthase (154 aa).

Residues Phe26, 60–62 (ALE), and 84–86 (CII) contribute to the 5-amino-6-(D-ribitylamino)uracil site. 89–90 (ET) contributes to the (2S)-2-hydroxy-3-oxobutyl phosphate binding site. His92 acts as the Proton donor in catalysis. 5-amino-6-(D-ribitylamino)uracil is bound at residue Asn117. A (2S)-2-hydroxy-3-oxobutyl phosphate-binding site is contributed by Arg131.

The protein belongs to the DMRL synthase family.

It catalyses the reaction (2S)-2-hydroxy-3-oxobutyl phosphate + 5-amino-6-(D-ribitylamino)uracil = 6,7-dimethyl-8-(1-D-ribityl)lumazine + phosphate + 2 H2O + H(+). It functions in the pathway cofactor biosynthesis; riboflavin biosynthesis; riboflavin from 2-hydroxy-3-oxobutyl phosphate and 5-amino-6-(D-ribitylamino)uracil: step 1/2. Catalyzes the formation of 6,7-dimethyl-8-ribityllumazine by condensation of 5-amino-6-(D-ribitylamino)uracil with 3,4-dihydroxy-2-butanone 4-phosphate. This is the penultimate step in the biosynthesis of riboflavin. This is 6,7-dimethyl-8-ribityllumazine synthase from Polaromonas sp. (strain JS666 / ATCC BAA-500).